Reading from the N-terminus, the 1577-residue chain is Pentafunctional AROM polypeptide (1577 aa).

Positions Met1–Asn384 are 3-dehydroquinate synthase. Residues Asp48–Asn50, Glu85–Lys88, Gly116–Val118, and Asp121 each bind NAD(+). Arg132 serves as a coordination point for 7-phospho-2-dehydro-3-deoxy-D-arabino-heptonate. NAD(+) is bound at residue Thr141–Thr142. Residues Asp148 and Lys154 each contribute to the 7-phospho-2-dehydro-3-deoxy-D-arabino-heptonate site. Residue Lys163 participates in NAD(+) binding. Asn164 contacts 7-phospho-2-dehydro-3-deoxy-D-arabino-heptonate. NAD(+)-binding positions include Phe181–Thr184 and Asn192. Glu196 provides a ligand contact to Zn(2+). Residues Glu196–Lys199 and Lys250 contribute to the 7-phospho-2-dehydro-3-deoxy-D-arabino-heptonate site. The active-site Proton acceptor; for 3-dehydroquinate synthase activity is the Glu260. 7-phospho-2-dehydro-3-deoxy-D-arabino-heptonate-binding positions include Arg264 to Asn268 and His271. Residue His271 coordinates Zn(2+). His275 acts as the Proton acceptor; for 3-dehydroquinate synthase activity in catalysis. Positions 287 and 356 each coordinate 7-phospho-2-dehydro-3-deoxy-D-arabino-heptonate. Position 287 (His287) interacts with Zn(2+). Positions Val397–Val842 are EPSP synthase. The For EPSP synthase activity role is filled by Cys824. A shikimate kinase region spans residues Asn864 to Ser1056. Residue Gly871–Thr878 coordinates ATP. The segment at Leu1057–Glu1277 is 3-dehydroquinase. Residue His1180 is the Proton acceptor; for 3-dehydroquinate dehydratase activity of the active site. Lys1208 (schiff-base intermediate with substrate; for 3-dehydroquinate dehydratase activity) is an active-site residue. The shikimate dehydrogenase stretch occupies residues Ala1290 to Lys1577.

This sequence in the N-terminal section; belongs to the sugar phosphate cyclases superfamily. Dehydroquinate synthase family. The protein in the 2nd section; belongs to the EPSP synthase family. It in the 3rd section; belongs to the shikimate kinase family. In the 4th section; belongs to the type-I 3-dehydroquinase family. This sequence in the C-terminal section; belongs to the shikimate dehydrogenase family. As to quaternary structure, homodimer. Zn(2+) is required as a cofactor.

The protein resides in the cytoplasm. The enzyme catalyses 7-phospho-2-dehydro-3-deoxy-D-arabino-heptonate = 3-dehydroquinate + phosphate. It catalyses the reaction 3-dehydroquinate = 3-dehydroshikimate + H2O. It carries out the reaction shikimate + NADP(+) = 3-dehydroshikimate + NADPH + H(+). The catalysed reaction is shikimate + ATP = 3-phosphoshikimate + ADP + H(+). The enzyme catalyses 3-phosphoshikimate + phosphoenolpyruvate = 5-O-(1-carboxyvinyl)-3-phosphoshikimate + phosphate. Its pathway is metabolic intermediate biosynthesis; chorismate biosynthesis; chorismate from D-erythrose 4-phosphate and phosphoenolpyruvate: step 2/7. It functions in the pathway metabolic intermediate biosynthesis; chorismate biosynthesis; chorismate from D-erythrose 4-phosphate and phosphoenolpyruvate: step 3/7. The protein operates within metabolic intermediate biosynthesis; chorismate biosynthesis; chorismate from D-erythrose 4-phosphate and phosphoenolpyruvate: step 4/7. It participates in metabolic intermediate biosynthesis; chorismate biosynthesis; chorismate from D-erythrose 4-phosphate and phosphoenolpyruvate: step 5/7. Its pathway is metabolic intermediate biosynthesis; chorismate biosynthesis; chorismate from D-erythrose 4-phosphate and phosphoenolpyruvate: step 6/7. The AROM polypeptide catalyzes 5 consecutive enzymatic reactions in prechorismate polyaromatic amino acid biosynthesis. This Talaromyces stipitatus (strain ATCC 10500 / CBS 375.48 / QM 6759 / NRRL 1006) (Penicillium stipitatum) protein is Pentafunctional AROM polypeptide.